Reading from the N-terminus, the 240-residue chain is Superoxide dismutase [Cu-Zn] (240 aa).

Residues 1–32 form the signal peptide; sequence MPKPADHRNHAAVSTSVLSALFLGAGAALLSA. Cys33 is lipidated: N-palmitoyl cysteine. Residue Cys33 is the site of S-diacylglycerol cysteine attachment. Composition is skewed to polar residues over residues 36-51 and 68-77; these read PQHA…SIWT and GAQSLTSTLT. The segment at 36-77 is disordered; sequence PQHASTVPGTTPSIWTGSPAPSGLSGHDEESPGAQSLTSTLT. Residues His116 and His118 each contribute to the Cu cation site. Cysteines 123 and 234 form a disulfide. Residues His146 and Asp158 each coordinate Zn(2+). A Cu cation-binding site is contributed by His195.

The protein belongs to the Cu-Zn superoxide dismutase family. The cofactor is Cu cation. Zn(2+) serves as cofactor.

It is found in the cell membrane. The enzyme catalyses 2 superoxide + 2 H(+) = H2O2 + O2. Inhibited by the copper chelator diethyl dithiocarbamate. Destroys radicals which are normally produced within the cells and which are toxic to biological systems. May play a role in favoring mycobacterial survival in phagocytes. This chain is Superoxide dismutase [Cu-Zn] (sodC), found in Mycobacterium bovis (strain ATCC BAA-935 / AF2122/97).